The following is a 396-amino-acid chain: Beta-peptidyl aminopeptidase BapA (396 aa).

Residues 1-21 form the signal peptide; sequence MHYLKFPAIIAGMLLAGAASA. Ser-271 acts as the Nucleophile in catalysis. Catalysis depends on proton donor/acceptor residues Ser-309 and Asp-311.

Belongs to the peptidase S58 family. Heterooctamer of 4 heterodimers ((alpha:beta)4); each heterodimer is composed of an alpha subunit and a beta subunit processed from the same precursor. Post-translationally, autoproteolytic processing to generate the alpha and beta subunit is required for self-activation and is proposed to use a similar mechanism as substrate cleavage.

It localises to the periplasm. It carries out the reaction Cleaves N-terminal beta-homoamino acids from peptides composed of 2 to 6 amino acids.. With respect to regulation, inhibited by AEBSF (4-(2-aminoethyl)benzenesulfonyl fluoride, Pefabloc SC). In terms of biological role, beta-aminopeptidase that can cleave synthetic beta-peptides which consist of backbone-elongated beta-amino acid residues that are not processed by common proteolytic enzymes. Can cleave the beta-peptides beta-homoVal-beta-homoAla-beta-homoLeu and beta-homoAla-beta-homoLeu. Requires a beta-amino acid at the N-terminus of peptide substrates and cleaves the peptide bond between the N-terminal beta-amino acid and the amino acid at the second position of tripeptidic substrates of the general structure H-betahXaa-Ile-betahTyr-OH according to the following preferences with regard to the side chain of the N-terminal beta-amino acid: aliphatic and aromatic &gt; OH-containing &gt; hydrogen, basic and polar. beta-homoVal-beta-homoAla-beta-homoLeu and beta-homoAla-beta-homoLeu. This chain is Beta-peptidyl aminopeptidase BapA, found in Sphingosinicella microcystinivorans.